The sequence spans 180 residues: Ribosome rescue factor SmrB (180 aa).

In terms of domain architecture, Smr spans 98–173 (LDLHGLTQLQ…GNAALLVLVA (76 aa)).

This sequence belongs to the SmrB family. As to quaternary structure, associates with collided ribosomes, but not with correctly translating polysomes.

Its function is as follows. Acts as a ribosome collision sensor. Detects stalled/collided disomes (pairs of ribosomes where the leading ribosome is stalled and a second ribosome has collided with it) and endonucleolytically cleaves mRNA at the 5' boundary of the stalled ribosome. Stalled/collided disomes form a new interface (primarily via the 30S subunits) that binds SmrB. Cleaved mRNA becomes available for tmRNA ligation, leading to ribosomal subunit dissociation and rescue of stalled ribosomes. The protein is Ribosome rescue factor SmrB of Pectobacterium carotovorum subsp. carotovorum (strain PC1).